The primary structure comprises 214 residues: 7-cyano-7-deazaguanine synthase (214 aa).

Residue 10–20 participates in ATP binding; it reads FSGGQDSTTCL. Residues Cys-184, Cys-193, Cys-196, and Cys-199 each coordinate Zn(2+).

Belongs to the QueC family. In terms of assembly, homodimer. Requires Zn(2+) as cofactor.

It carries out the reaction 7-carboxy-7-deazaguanine + NH4(+) + ATP = 7-cyano-7-deazaguanine + ADP + phosphate + H2O + H(+). Its pathway is purine metabolism; 7-cyano-7-deazaguanine biosynthesis. In terms of biological role, catalyzes the ATP-dependent conversion of 7-carboxy-7-deazaguanine (CDG) to 7-cyano-7-deazaguanine (preQ(0)). This is 7-cyano-7-deazaguanine synthase from Exiguobacterium sp. (strain ATCC BAA-1283 / AT1b).